A 113-amino-acid polypeptide reads, in one-letter code: uncharacterized protein (113 aa).

This is an uncharacterized protein from Ureaplasma parvum serovar 3 (strain ATCC 700970).